The sequence spans 81 residues: Relaxin-like protein AGF (81 aa).

3 disulfides stabilise this stretch: Cys-14–Cys-66, Cys-26–Cys-79, and Cys-65–Cys-70. The N-linked (GlcNAc...) asparagine glycan is linked to Asn-37.

The protein belongs to the insulin family. In terms of assembly, heterodimer of a B chain and an A chain linked by two disulfide bonds.

Its subcellular location is the secreted. Functionally, uncertain. In Hypanus sabinus (Atlantic stingray), this protein is Relaxin-like protein AGF.